We begin with the raw amino-acid sequence, 248 residues long: MNVVVDTHTHTLASGHAYSTIIENAQSAQNKGLKLLCTTDHAPEMPGAPHYWYFNNQRILPRFLHQVGILRGVEANILNVKGEIDLPFSSDQHLDWVIASFHEPVFAPASEAEHTAALLNVIKSGRIDVLGHSGNPNYPFDIERVLQCAKEYNVAIEVNNTSLTGKSRKGSDVRCDKIVEIGKEIGVYFTTGSDAHFCEEIARLDLAIALLEKYEIAEDKIITTSTSRFLNFLLLRGKLAIPEFERLY.

Positions 8, 10, 16, 41, 74, 102, 132, 194, and 196 each coordinate Zn(2+).

This sequence belongs to the PHP family. The cofactor is Zn(2+).

In Aliivibrio fischeri (strain MJ11) (Vibrio fischeri), this protein is Probable phosphatase VFMJ11_A0091.